The following is a 150-amino-acid chain: Large ribosomal subunit protein bL9 (150 aa).

The protein belongs to the bacterial ribosomal protein bL9 family.

Its function is as follows. Binds to the 23S rRNA. The polypeptide is Large ribosomal subunit protein bL9 (Hydrogenovibrio crunogenus (strain DSM 25203 / XCL-2) (Thiomicrospira crunogena)).